A 636-amino-acid polypeptide reads, in one-letter code: Cysteine-rich receptor-like protein kinase 24 (636 aa).

An N-terminal signal peptide occupies residues 1 to 20; it reads MVKFLVIFWFVVISFSHVSA. 2 Gnk2-homologous domains span residues 21-124 and 130-235; these read QVCL…NRSF and MEIL…LYPF. The Extracellular portion of the chain corresponds to 21 to 254; that stretch reads QVCLERSGFF…RQKDGKSIST (234 aa). N-linked (GlcNAc...) asparagine glycans are attached at residues Asn33, Asn50, Asn98, Asn101, Asn121, Asn137, Asn145, and Asn197. Residues 255–275 traverse the membrane as a helical segment; it reads GAIVAIIVVPILLLALGVGLW. Residues 276–636 are Cytoplasmic-facing; it reads KRRKAYKTKT…SVSVTCVSPR (361 aa). Positions 312–585 constitute a Protein kinase domain; it reads FHNVNKLGHG…TMSTVFHMLT (274 aa). Residues 318–326 and Lys340 contribute to the ATP site; that span reads LGHGGFGEV. Asp437 acts as the Proton acceptor in catalysis.

This sequence belongs to the protein kinase superfamily. Ser/Thr protein kinase family. CRK subfamily.

It is found in the membrane. It catalyses the reaction L-seryl-[protein] + ATP = O-phospho-L-seryl-[protein] + ADP + H(+). The enzyme catalyses L-threonyl-[protein] + ATP = O-phospho-L-threonyl-[protein] + ADP + H(+). The protein is Cysteine-rich receptor-like protein kinase 24 (CRK24) of Arabidopsis thaliana (Mouse-ear cress).